An 880-amino-acid polypeptide reads, in one-letter code: Leucine--tRNA ligase (880 aa).

The short motif at 46–56 (PYPSGALHMGH) is the 'HIGH' region element. The short motif at 638–642 (KMSKS) is the 'KMSKS' region element. An ATP-binding site is contributed by lysine 641.

This sequence belongs to the class-I aminoacyl-tRNA synthetase family.

The protein resides in the cytoplasm. It carries out the reaction tRNA(Leu) + L-leucine + ATP = L-leucyl-tRNA(Leu) + AMP + diphosphate. The polypeptide is Leucine--tRNA ligase (Xanthomonas oryzae pv. oryzae (strain MAFF 311018)).